The chain runs to 438 residues: Serine hydroxymethyltransferase (438 aa).

(6S)-5,6,7,8-tetrahydrofolate-binding positions include leucine 133 and 137–139; that span reads GHL. Residue lysine 242 is modified to N6-(pyridoxal phosphate)lysine.

It belongs to the SHMT family. As to quaternary structure, homodimer. Pyridoxal 5'-phosphate is required as a cofactor.

The protein localises to the cytoplasm. It carries out the reaction (6R)-5,10-methylene-5,6,7,8-tetrahydrofolate + glycine + H2O = (6S)-5,6,7,8-tetrahydrofolate + L-serine. It participates in one-carbon metabolism; tetrahydrofolate interconversion. Its pathway is amino-acid biosynthesis; glycine biosynthesis; glycine from L-serine: step 1/1. Its function is as follows. Catalyzes the reversible interconversion of serine and glycine with tetrahydrofolate (THF) serving as the one-carbon carrier. This reaction serves as the major source of one-carbon groups required for the biosynthesis of purines, thymidylate, methionine, and other important biomolecules. Also exhibits THF-independent aldolase activity toward beta-hydroxyamino acids, producing glycine and aldehydes, via a retro-aldol mechanism. The protein is Serine hydroxymethyltransferase of Brucella ovis (strain ATCC 25840 / 63/290 / NCTC 10512).